The chain runs to 840 residues: Protein translocase subunit SecA (840 aa).

ATP contacts are provided by residues glutamine 87, 105-109 (GEGKT), and aspartate 494. The interval 791–840 (LRKEQEDQPMFFGPAEGAGQKPQTRKDRKVGRNDPCPCGSGKKYKKCCGK) is disordered. 4 residues coordinate Zn(2+): cysteine 826, cysteine 828, cysteine 837, and cysteine 838.

It belongs to the SecA family. As to quaternary structure, monomer and homodimer. Part of the essential Sec protein translocation apparatus which comprises SecA, SecYEG and auxiliary proteins SecDF-YajC and YidC. The cofactor is Zn(2+).

Its subcellular location is the cell inner membrane. It localises to the cytoplasm. The catalysed reaction is ATP + H2O + cellular proteinSide 1 = ADP + phosphate + cellular proteinSide 2.. In terms of biological role, part of the Sec protein translocase complex. Interacts with the SecYEG preprotein conducting channel. Has a central role in coupling the hydrolysis of ATP to the transfer of proteins into and across the cell membrane, serving as an ATP-driven molecular motor driving the stepwise translocation of polypeptide chains across the membrane. The polypeptide is Protein translocase subunit SecA (Syntrophobacter fumaroxidans (strain DSM 10017 / MPOB)).